We begin with the raw amino-acid sequence, 156 residues long: Ribonuclease H (156 aa).

The RNase H type-1 domain occupies 1–142 (MGKQVEIFTD…CDELARAAAN (142 aa)). Residues aspartate 10, glutamate 48, aspartate 70, and aspartate 134 each coordinate Mg(2+).

Belongs to the RNase H family. As to quaternary structure, monomer. It depends on Mg(2+) as a cofactor.

Its subcellular location is the cytoplasm. It carries out the reaction Endonucleolytic cleavage to 5'-phosphomonoester.. Functionally, endonuclease that specifically degrades the RNA of RNA-DNA hybrids. The polypeptide is Ribonuclease H (Photorhabdus luminescens (Xenorhabdus luminescens)).